The following is a 140-amino-acid chain: NADH-quinone oxidoreductase subunit I (140 aa).

2 4Fe-4S ferredoxin-type domains span residues 42-71 (GSFTLHSEKCIACGLCQQACPNKVIKVGSI) and 81-110 (ASYEMEMKYCLFCGLCVEACPTNALVFNQE). [4Fe-4S] cluster contacts are provided by Cys51, Cys54, Cys57, Cys61, Cys90, Cys93, Cys96, and Cys100.

This sequence belongs to the complex I 23 kDa subunit family. As to quaternary structure, NDH-1 is composed of 14 different subunits. Subunits NuoA, H, J, K, L, M, N constitute the membrane sector of the complex. [4Fe-4S] cluster is required as a cofactor.

The protein resides in the cell membrane. The enzyme catalyses a quinone + NADH + 5 H(+)(in) = a quinol + NAD(+) + 4 H(+)(out). Functionally, NDH-1 shuttles electrons from NADH, via FMN and iron-sulfur (Fe-S) centers, to quinones in the respiratory chain. The immediate electron acceptor for the enzyme in this species is believed to be ubiquinone. Couples the redox reaction to proton translocation (for every two electrons transferred, four hydrogen ions are translocated across the cytoplasmic membrane), and thus conserves the redox energy in a proton gradient. The polypeptide is NADH-quinone oxidoreductase subunit I (Carboxydothermus hydrogenoformans (strain ATCC BAA-161 / DSM 6008 / Z-2901)).